Consider the following 150-residue polypeptide: Ribosome maturation factor RimP (150 aa).

It belongs to the RimP family.

It is found in the cytoplasm. Functionally, required for maturation of 30S ribosomal subunits. The polypeptide is Ribosome maturation factor RimP (Thermotoga sp. (strain RQ2)).